Here is a 93-residue protein sequence, read N- to C-terminus: Small ribosomal subunit protein bS16 (93 aa).

Belongs to the bacterial ribosomal protein bS16 family.

The protein is Small ribosomal subunit protein bS16 of Dictyoglomus thermophilum (strain ATCC 35947 / DSM 3960 / H-6-12).